We begin with the raw amino-acid sequence, 380 residues long: Lipoyl synthase, mitochondrial (380 aa).

[4Fe-4S] cluster is bound by residues cysteine 104, cysteine 109, cysteine 115, cysteine 135, cysteine 139, cysteine 142, and serine 350. In terms of domain architecture, Radical SAM core spans 120–339; that stretch reads EHGTQTATIM…ETRGNELGFL (220 aa).

Belongs to the radical SAM superfamily. Lipoyl synthase family. [4Fe-4S] cluster serves as cofactor.

Its subcellular location is the mitochondrion. It carries out the reaction [[Fe-S] cluster scaffold protein carrying a second [4Fe-4S](2+) cluster] + N(6)-octanoyl-L-lysyl-[protein] + 2 oxidized [2Fe-2S]-[ferredoxin] + 2 S-adenosyl-L-methionine + 4 H(+) = [[Fe-S] cluster scaffold protein] + N(6)-[(R)-dihydrolipoyl]-L-lysyl-[protein] + 4 Fe(3+) + 2 hydrogen sulfide + 2 5'-deoxyadenosine + 2 L-methionine + 2 reduced [2Fe-2S]-[ferredoxin]. Its pathway is protein modification; protein lipoylation via endogenous pathway; protein N(6)-(lipoyl)lysine from octanoyl-[acyl-carrier-protein]: step 2/2. Functionally, catalyzes the radical-mediated insertion of two sulfur atoms into the C-6 and C-8 positions of the octanoyl moiety bound to the lipoyl domains of lipoate-dependent enzymes, thereby converting the octanoylated domains into lipoylated derivatives. The polypeptide is Lipoyl synthase, mitochondrial (Culex quinquefasciatus (Southern house mosquito)).